The primary structure comprises 117 residues: B-box domain protein 30 (117 aa).

The segment at 27–73 adopts a B box-type; atypical zinc-finger fold; the sequence is KAPVSCELCGENATVYCEADAAFLCRKCDRWVHSANFLARRHLRRVI. C32, C35, C54, and H59 together coordinate Zn(2+). Positions 113–117 match the PFVFL motif; the sequence is PFVFL.

As to quaternary structure, interacts with CO (via B-box) and with TPL (via PFVFL motif). In terms of tissue distribution, highly expressed in shoot apical meristems and in vascular tissues of leaves. Also detected in petioles.

It is found in the nucleus. Its function is as follows. Developmental regulator acting by forming heterodimeric complexes, that sequester CO and CO-like (COL) proteins into non-functional complexes. Engages CO and the transcriptional repressor TPL in a tripartite complex. Involved in the CO-mediated long-day flowering-promotion pathway. The sequence is that of B-box domain protein 30 from Arabidopsis thaliana (Mouse-ear cress).